Reading from the N-terminus, the 412-residue chain is Histidinol dehydrogenase (412 aa).

Positions 118, 176, and 199 each coordinate NAD(+). Positions 222, 244, and 247 each coordinate substrate. The Zn(2+) site is built by Gln244 and His247. Residues Glu311 and His312 each act as proton acceptor in the active site. Residues His312, Asp345, Glu399, and His404 each coordinate substrate. Asp345 provides a ligand contact to Zn(2+). His404 contributes to the Zn(2+) binding site.

The protein belongs to the histidinol dehydrogenase family. Zn(2+) serves as cofactor.

It catalyses the reaction L-histidinol + 2 NAD(+) + H2O = L-histidine + 2 NADH + 3 H(+). It functions in the pathway amino-acid biosynthesis; L-histidine biosynthesis; L-histidine from 5-phospho-alpha-D-ribose 1-diphosphate: step 9/9. Functionally, catalyzes the sequential NAD-dependent oxidations of L-histidinol to L-histidinaldehyde and then to L-histidine. In Thermus thermophilus (strain ATCC BAA-163 / DSM 7039 / HB27), this protein is Histidinol dehydrogenase.